A 354-amino-acid chain; its full sequence is NADH-quinone oxidoreductase subunit H (354 aa).

Helical transmembrane passes span 25–45, 91–111, 126–146, 170–190, 205–225, 257–277, 290–310, and 330–350; these read LVRI…LILW, WVYL…WAVI, LLYA…AGWA, MGFA…SDIV, FLSW…VSGI, LFFL…SILF, FIPG…VFIW, and VFLP…MSPL.

This sequence belongs to the complex I subunit 1 family. In terms of assembly, NDH-1 is composed of 14 different subunits. Subunits NuoA, H, J, K, L, M, N constitute the membrane sector of the complex.

It localises to the cell inner membrane. The enzyme catalyses a quinone + NADH + 5 H(+)(in) = a quinol + NAD(+) + 4 H(+)(out). Its function is as follows. NDH-1 shuttles electrons from NADH, via FMN and iron-sulfur (Fe-S) centers, to quinones in the respiratory chain. The immediate electron acceptor for the enzyme in this species is believed to be ubiquinone. Couples the redox reaction to proton translocation (for every two electrons transferred, four hydrogen ions are translocated across the cytoplasmic membrane), and thus conserves the redox energy in a proton gradient. This subunit may bind ubiquinone. This chain is NADH-quinone oxidoreductase subunit H, found in Paraburkholderia phymatum (strain DSM 17167 / CIP 108236 / LMG 21445 / STM815) (Burkholderia phymatum).